We begin with the raw amino-acid sequence, 48 residues long: Small, acid-soluble spore protein O (48 aa).

Residues 1-48 (MAKRKANHVINGMNNAKRQGNGAGYIENDQHILTEAERQNNKKRKTNQ) are disordered. The segment covering 28 to 40 (NDQHILTEAERQN) has biased composition (basic and acidic residues).

The protein belongs to the SspO family.

It is found in the spore core. This chain is Small, acid-soluble spore protein O, found in Bacillus licheniformis (strain ATCC 14580 / DSM 13 / JCM 2505 / CCUG 7422 / NBRC 12200 / NCIMB 9375 / NCTC 10341 / NRRL NRS-1264 / Gibson 46).